The chain runs to 335 residues: MSKRKAPQETLNGGITDMLTELANFEKNVSQAIHKYNAYRKAASVIAKYPHKIKSGAEAKKLPGVGTKIAEKIDEFLATGKLRKLEKIRQDDTSSSINFLTRVSGIGPSAARKFVDEGIKTLEDLRKNEDKLNHHQRIGLKYFGDFEKRIPREEMLQMQDIVLNEVKKVDSEYIATVCGSFRRGAESSGDMDVLLTHPSFTSESTKQPKLLHQVVEQLQKVHFITDTLSKGETKFMGVCQLPSKNDEKEYPHRRIDIRLIPKDQYYCGVLYFTGSDIFNKNMRAHALEKGFTINEYTIRPLGVTGVAGEPLPVDSEKDIFDYIQWKYREPKDRSE.

K41 is covalently cross-linked (Glycyl lysine isopeptide (Lys-Gly) (interchain with G-Cter in ubiquitin)). K60 contributes to the K(+) binding site. K60 serves as a coordination point for Na(+). K61 is covalently cross-linked (Glycyl lysine isopeptide (Lys-Gly) (interchain with G-Cter in ubiquitin)). K(+) contacts are provided by L62 and V65. Residues L62 and V65 each contribute to the Na(+) site. K72 (nucleophile; Schiff-base intermediate with DNA; for 5'-dRP lyase activity) is an active-site residue. Position 72 is an N6-acetyllysine (K72). K81 participates in a covalent cross-link: Glycyl lysine isopeptide (Lys-Gly) (interchain with G-Cter in ubiquitin). At R83 the chain carries Omega-N-methylarginine; by PRMT6. 3 residues coordinate K(+): T101, V103, and I106. 3 residues coordinate Na(+): T101, V103, and I106. A dATP-binding site is contributed by R149. Residue R149 participates in dCTP binding. Residue R149 participates in dGTP binding. R149 lines the dTTP pocket. Residue R152 is modified to Omega-N-methylarginine; by PRMT6. 4 residues coordinate dATP: S180, R183, G189, and D190. S180, R183, G189, and D190 together coordinate dCTP. Positions 180, 183, 189, 190, and 192 each coordinate dGTP. Residues S180, R183, G189, and D190 each contribute to the dTTP site. Positions 183–192 (RGAESSGDMD) are DNA-binding. D190, D192, and D256 together coordinate Mg(2+).

This sequence belongs to the DNA polymerase type-X family. As to quaternary structure, monomer. Binds single-stranded DNA (ssDNA). Interacts with APEX1, LIG1, LIG3, FEN1, PCNA and XRCC1. Interacts with HUWE1/ARF-BP1, STUB1/CHIP and USP47. Interacts with FAM168A. Requires Mg(2+) as cofactor. In terms of processing, methylation by PRMT6 stimulates the polymerase activity by enhancing DNA binding and processivity. Post-translationally, ubiquitinated at Lys-41, Lys-61 and Lys-81: monoubiquitinated by HUWE1/ARF-BP1. Monoubiquitinated protein is then the target of STUB1/CHIP, which catalyzes polyubiquitination from monoubiquitin, leading to degradation by the proteasome. USP47 mediates the deubiquitination of monoubiquitinated protein, preventing polyubiquitination by STUB1/CHIP and its subsequent degradation.

The protein resides in the nucleus. Its subcellular location is the cytoplasm. The enzyme catalyses DNA(n) + a 2'-deoxyribonucleoside 5'-triphosphate = DNA(n+1) + diphosphate. The catalysed reaction is a 5'-end 2'-deoxyribose-2'-deoxyribonucleotide-DNA = (2E,4S)-4-hydroxypenten-2-al-5-phosphate + a 5'-end 5'-phospho-2'-deoxyribonucleoside-DNA + H(+). It catalyses the reaction 2'-deoxyribonucleotide-(2'-deoxyribose 5'-phosphate)-2'-deoxyribonucleotide-DNA = a 3'-end 2'-deoxyribonucleotide-(2,3-dehydro-2,3-deoxyribose 5'-phosphate)-DNA + a 5'-end 5'-phospho-2'-deoxyribonucleoside-DNA + H(+). Its function is as follows. Repair polymerase that plays a key role in base-excision repair. During this process, the damaged base is excised by specific DNA glycosylases, the DNA backbone is nicked at the abasic site by an apurinic/apyrimidic (AP) endonuclease, and POLB removes 5'-deoxyribose-phosphate from the preincised AP site acting as a 5'-deoxyribose-phosphate lyase (5'-dRP lyase); through its DNA polymerase activity, it adds one nucleotide to the 3' end of the arising single-nucleotide gap. Conducts 'gap-filling' DNA synthesis in a stepwise distributive fashion rather than in a processive fashion as for other DNA polymerases. It is also able to cleave sugar-phosphate bonds 3' to an intact AP site, acting as an AP lyase. This chain is DNA polymerase beta (POLB), found in Homo sapiens (Human).